Here is a 112-residue protein sequence, read N- to C-terminus: ATP synthase subunit c (112 aa).

2 consecutive transmembrane segments (helical) span residues 36–56 (FSVLAAGLGLGVAALGGAIGM) and 81–101 (MFIALAMIEAQVIYALVIALI).

This sequence belongs to the ATPase C chain family. As to quaternary structure, F-type ATPases have 2 components, F(1) - the catalytic core - and F(0) - the membrane proton channel. F(1) has five subunits: alpha(3), beta(3), gamma(1), delta(1), epsilon(1). F(0) has three main subunits: a(1), b(2) and c(10-14). The alpha and beta chains form an alternating ring which encloses part of the gamma chain. F(1) is attached to F(0) by a central stalk formed by the gamma and epsilon chains, while a peripheral stalk is formed by the delta and b chains.

It is found in the cell inner membrane. F(1)F(0) ATP synthase produces ATP from ADP in the presence of a proton or sodium gradient. F-type ATPases consist of two structural domains, F(1) containing the extramembraneous catalytic core and F(0) containing the membrane proton channel, linked together by a central stalk and a peripheral stalk. During catalysis, ATP synthesis in the catalytic domain of F(1) is coupled via a rotary mechanism of the central stalk subunits to proton translocation. In terms of biological role, key component of the F(0) channel; it plays a direct role in translocation across the membrane. A homomeric c-ring of between 10-14 subunits forms the central stalk rotor element with the F(1) delta and epsilon subunits. This is ATP synthase subunit c from Campylobacter jejuni subsp. jejuni serotype O:6 (strain 81116 / NCTC 11828).